A 453-amino-acid polypeptide reads, in one-letter code: Bifunctional protein GlmU (453 aa).

The tract at residues 1-231 (MERTCLAIIL…EVEMTGCNNR (231 aa)) is pyrophosphorylase. UDP-N-acetyl-alpha-D-glucosamine contacts are provided by residues 10-13 (LAAG), K24, Q77, 82-83 (GT), 105-107 (YGD), G143, E157, N172, and N229. Residue D107 participates in Mg(2+) binding. Mg(2+) is bound at residue N229. Positions 232–252 (AELAFIERLWQERRRHELMLS) are linker. The tract at residues 253-453 (GVTMIAPETV…AIKAAKKGSH (201 aa)) is N-acetyltransferase. Residues R318 and K336 each coordinate UDP-N-acetyl-alpha-D-glucosamine. H348 functions as the Proton acceptor in the catalytic mechanism. UDP-N-acetyl-alpha-D-glucosamine-binding residues include Y351 and N362. Acetyl-CoA-binding positions include A365, 371-372 (NY), S390, S408, and R425.

It in the N-terminal section; belongs to the N-acetylglucosamine-1-phosphate uridyltransferase family. In the C-terminal section; belongs to the transferase hexapeptide repeat family. As to quaternary structure, homotrimer. Requires Mg(2+) as cofactor.

The protein localises to the cytoplasm. The enzyme catalyses alpha-D-glucosamine 1-phosphate + acetyl-CoA = N-acetyl-alpha-D-glucosamine 1-phosphate + CoA + H(+). It catalyses the reaction N-acetyl-alpha-D-glucosamine 1-phosphate + UTP + H(+) = UDP-N-acetyl-alpha-D-glucosamine + diphosphate. Its pathway is nucleotide-sugar biosynthesis; UDP-N-acetyl-alpha-D-glucosamine biosynthesis; N-acetyl-alpha-D-glucosamine 1-phosphate from alpha-D-glucosamine 6-phosphate (route II): step 2/2. It functions in the pathway nucleotide-sugar biosynthesis; UDP-N-acetyl-alpha-D-glucosamine biosynthesis; UDP-N-acetyl-alpha-D-glucosamine from N-acetyl-alpha-D-glucosamine 1-phosphate: step 1/1. The protein operates within bacterial outer membrane biogenesis; LPS lipid A biosynthesis. Its function is as follows. Catalyzes the last two sequential reactions in the de novo biosynthetic pathway for UDP-N-acetylglucosamine (UDP-GlcNAc). The C-terminal domain catalyzes the transfer of acetyl group from acetyl coenzyme A to glucosamine-1-phosphate (GlcN-1-P) to produce N-acetylglucosamine-1-phosphate (GlcNAc-1-P), which is converted into UDP-GlcNAc by the transfer of uridine 5-monophosphate (from uridine 5-triphosphate), a reaction catalyzed by the N-terminal domain. The protein is Bifunctional protein GlmU of Rhizobium rhizogenes (strain K84 / ATCC BAA-868) (Agrobacterium radiobacter).